The sequence spans 426 residues: Histidine--tRNA ligase (426 aa).

Belongs to the class-II aminoacyl-tRNA synthetase family. As to quaternary structure, homodimer.

The protein resides in the cytoplasm. It carries out the reaction tRNA(His) + L-histidine + ATP = L-histidyl-tRNA(His) + AMP + diphosphate + H(+). The protein is Histidine--tRNA ligase of Streptococcus agalactiae serotype III (strain NEM316).